A 591-amino-acid chain; its full sequence is Probable translation initiation factor IF-2 (591 aa).

A tr-type G domain is found at 7–223 (LRTPIVCVMG…LLGLAQKFLE (217 aa)). The interval 16–23 (GHVDHGKT) is G1. 16 to 23 (GHVDHGKT) contributes to the GTP binding site. Residues 41 to 45 (AITQH) form a G2 region. The G3 stretch occupies residues 78-81 (DTPG). Residues 78–82 (DTPGH) and 132–135 (NKID) contribute to the GTP site. The segment at 132–135 (NKID) is G4. Residues 200 to 202 (SAF) are G5.

The protein belongs to the TRAFAC class translation factor GTPase superfamily. Classic translation factor GTPase family. IF-2 subfamily.

Function in general translation initiation by promoting the binding of the formylmethionine-tRNA to ribosomes. Seems to function along with eIF-2. The polypeptide is Probable translation initiation factor IF-2 (Methanosarcina mazei (strain ATCC BAA-159 / DSM 3647 / Goe1 / Go1 / JCM 11833 / OCM 88) (Methanosarcina frisia)).